Reading from the N-terminus, the 194-residue chain is Peptidyl-tRNA hydrolase (194 aa).

Residue Y16 participates in tRNA binding. Residue H21 is the Proton acceptor of the active site. Residues F67, N69, and N115 each coordinate tRNA.

The protein belongs to the PTH family. In terms of assembly, monomer.

The protein resides in the cytoplasm. It catalyses the reaction an N-acyl-L-alpha-aminoacyl-tRNA + H2O = an N-acyl-L-amino acid + a tRNA + H(+). Functionally, hydrolyzes ribosome-free peptidyl-tRNAs (with 1 or more amino acids incorporated), which drop off the ribosome during protein synthesis, or as a result of ribosome stalling. Catalyzes the release of premature peptidyl moieties from peptidyl-tRNA molecules trapped in stalled 50S ribosomal subunits, and thus maintains levels of free tRNAs and 50S ribosomes. The chain is Peptidyl-tRNA hydrolase from Salmonella dublin (strain CT_02021853).